Reading from the N-terminus, the 412-residue chain is Putative pectate lyase 11 (412 aa).

The N-terminal stretch at 1–24 (MVSYSNNHFAYAFLLLLTIGNTLA) is a signal peptide. 3 residues coordinate Ca(2+): aspartate 210, aspartate 234, and aspartate 238. The active site involves arginine 290.

This sequence belongs to the polysaccharide lyase 1 family. Requires Ca(2+) as cofactor.

It catalyses the reaction Eliminative cleavage of (1-&gt;4)-alpha-D-galacturonan to give oligosaccharides with 4-deoxy-alpha-D-galact-4-enuronosyl groups at their non-reducing ends.. It participates in glycan metabolism; pectin degradation; 2-dehydro-3-deoxy-D-gluconate from pectin: step 2/5. The sequence is that of Putative pectate lyase 11 from Arabidopsis thaliana (Mouse-ear cress).